A 163-amino-acid polypeptide reads, in one-letter code: Probable cobalt-precorrin-6B C(15)-methyltransferase (decarboxylating) (163 aa).

Residues Thr-6, 30–34, Asp-51, and Gly-75 each bind S-adenosyl-L-methionine; that span reads GCGSG.

It belongs to the methyltransferase superfamily. Archaeal-type CbiT family.

The catalysed reaction is Co-precorrin-6B + S-adenosyl-L-methionine = Co-precorrin-7 + S-adenosyl-L-homocysteine + CO2. It functions in the pathway cofactor biosynthesis; adenosylcobalamin biosynthesis; cob(II)yrinate a,c-diamide from sirohydrochlorin (anaerobic route): step 8/10. Functionally, catalyzes the methylation of C-15 in cobalt-precorrin-6B followed by the decarboxylation of C-12 to form cobalt-precorrin-7. In Archaeoglobus fulgidus (strain ATCC 49558 / DSM 4304 / JCM 9628 / NBRC 100126 / VC-16), this protein is Probable cobalt-precorrin-6B C(15)-methyltransferase (decarboxylating).